A 226-amino-acid chain; its full sequence is Protein TRI1 (226 aa).

The DEK-C domain maps to 1–56 (MADINKYIPMVDAILSVSNPDEISPKRVRKALQILYSVNLDSQRKLINELILERFG). The interval 83-118 (QKEEERPLRSTRKRKGKSESKSKRKKKKNDSPDSNS) is disordered. The segment covering 91–110 (RSTRKRKGKSESKSKRKKKK) has biased composition (basic residues). Ser-113 is subject to Phosphoserine. The region spanning 119-195 (ISVRKVLLSA…NKLLTKHLFN (77 aa)) is the SWIB/MDM2 domain. Over residues 200–218 (VKHEEEQKQTPEKEIKLEN) the composition is skewed to basic and acidic residues. Positions 200–226 (VKHEEEQKQTPEKEIKLENESLPNLSG) are disordered. Residues Lys-201 and Lys-215 each participate in a glycyl lysine isopeptide (Lys-Gly) (interchain with G-Cter in SUMO) cross-link. Ser-225 carries the phosphoserine modification.

It localises to the cytoplasm. The protein localises to the nucleus. The protein resides in the nucleolus. In terms of biological role, may be involved in transcription regulation. This chain is Protein TRI1 (TRI1), found in Saccharomyces cerevisiae (strain ATCC 204508 / S288c) (Baker's yeast).